The following is a 173-amino-acid chain: Crossover junction endodeoxyribonuclease RuvC (173 aa).

Catalysis depends on residues aspartate 11, glutamate 71, and aspartate 143. Mg(2+)-binding residues include aspartate 11, glutamate 71, and aspartate 143.

This sequence belongs to the RuvC family. Homodimer which binds Holliday junction (HJ) DNA. The HJ becomes 2-fold symmetrical on binding to RuvC with unstacked arms; it has a different conformation from HJ DNA in complex with RuvA. In the full resolvosome a probable DNA-RuvA(4)-RuvB(12)-RuvC(2) complex forms which resolves the HJ. The cofactor is Mg(2+).

Its subcellular location is the cytoplasm. The catalysed reaction is Endonucleolytic cleavage at a junction such as a reciprocal single-stranded crossover between two homologous DNA duplexes (Holliday junction).. Functionally, the RuvA-RuvB-RuvC complex processes Holliday junction (HJ) DNA during genetic recombination and DNA repair. Endonuclease that resolves HJ intermediates. Cleaves cruciform DNA by making single-stranded nicks across the HJ at symmetrical positions within the homologous arms, yielding a 5'-phosphate and a 3'-hydroxyl group; requires a central core of homology in the junction. The consensus cleavage sequence is 5'-(A/T)TT(C/G)-3'. Cleavage occurs on the 3'-side of the TT dinucleotide at the point of strand exchange. HJ branch migration catalyzed by RuvA-RuvB allows RuvC to scan DNA until it finds its consensus sequence, where it cleaves and resolves the cruciform DNA. The polypeptide is Crossover junction endodeoxyribonuclease RuvC (Brucella abortus (strain 2308)).